Consider the following 59-residue polypeptide: Large ribosomal subunit protein uL30 (59 aa).

Belongs to the universal ribosomal protein uL30 family. Part of the 50S ribosomal subunit.

The protein is Large ribosomal subunit protein uL30 of Aeromonas hydrophila subsp. hydrophila (strain ATCC 7966 / DSM 30187 / BCRC 13018 / CCUG 14551 / JCM 1027 / KCTC 2358 / NCIMB 9240 / NCTC 8049).